The primary structure comprises 201 residues: Small ribosomal subunit protein uS4 (201 aa).

Residues 103–167 enclose the S4 RNA-binding domain; it reads RRLQTIVTKK…SKIPQVLEKT (65 aa). A disordered region spans residues 163-201; it reads VLEKTKSEAPAEETVEAPAEETVEAPAEEKKEESPSTES. The span at 172-185 shows a compositional bias: acidic residues; it reads PAEETVEAPAEETV. A compositionally biased stretch (basic and acidic residues) spans 189–201; that stretch reads AEEKKEESPSTES.

This sequence belongs to the universal ribosomal protein uS4 family. As to quaternary structure, part of the 30S ribosomal subunit. Contacts protein S5. The interaction surface between S4 and S5 is involved in control of translational fidelity.

Its function is as follows. One of the primary rRNA binding proteins, it binds directly to 16S rRNA where it nucleates assembly of the body of the 30S subunit. Functionally, with S5 and S12 plays an important role in translational accuracy. The chain is Small ribosomal subunit protein uS4 from Nitrosopumilus maritimus (strain SCM1).